Here is a 197-residue protein sequence, read N- to C-terminus: Peptidoglycan-recognition protein 1 (197 aa).

The N-terminal stretch at 1 to 23 (MKLATITFFLLTEIFFYISYAEA) is a signal peptide. Cystine bridges form between Cys-31/Cys-154 and Cys-68/Cys-74. The region spanning 53–180 (KPLERVVIHH…RNVKATKSPG (128 aa)) is the N-acetylmuramoyl-L-alanine amidase domain.

The protein belongs to the N-acetylmuramoyl-L-alanine amidase 2 family. Localizes to plasma (at protein level).

The protein resides in the secreted. Peptidoglycan-recognition protein probably involved in innate immunity by binding to peptidoglycans (PGN) of bacteria and activating the prophenoloxidase (proPO) cascade immune response. Binds to 1,3-beta-D-glucan and PGN. The chain is Peptidoglycan-recognition protein 1 (PGRP-1) from Holotrichia diomphalia (Korean black chafer).